The primary structure comprises 252 residues: Cell division protein ZapD (252 aa).

Belongs to the ZapD family. Interacts with FtsZ.

The protein localises to the cytoplasm. Functionally, cell division factor that enhances FtsZ-ring assembly. Directly interacts with FtsZ and promotes bundling of FtsZ protofilaments, with a reduction in FtsZ GTPase activity. The sequence is that of Cell division protein ZapD from Ralstonia pickettii (strain 12J).